The sequence spans 265 residues: Zwei Ig domain protein zig-1 (265 aa).

Residues 1–17 form the signal peptide; it reads MKNLLLITFFVVSTVTA. Residues 18–232 lie on the Extracellular side of the membrane; the sequence is LGGRGSKSAL…KMVDVRSEFQ (215 aa). Ig-like C2-type domains follow at residues 41 to 108 and 120 to 220; these read HATD…TPHG and PVVH…MLLV. 2 N-linked (GlcNAc...) asparagine glycosylation sites follow: N83 and N193. A disulfide bond links C155 and C202. The helical transmembrane segment at 233–253 threads the bilayer; that stretch reads WVYPLAVILITIFLLVVIIVF. Over 254–265 the chain is Cytoplasmic; it reads CEWRNKKSTSKA.

Expressed in neurons and body wall muscles.

It localises to the cell membrane. Probably not involved in maintaining the position of ASI and ASH head neuron cell bodies and ventral nerve cord axons of PVQ, PVP, RMEV, AVK and HSN neurons. The chain is Zwei Ig domain protein zig-1 from Caenorhabditis elegans.